Consider the following 698-residue polypeptide: Protein SST2 (698 aa).

Positions 10–203 (ELSSKNFSRT…GAKPNVWSPT (194 aa)) are fungal-DR. Ser-252 carries the post-translational modification Phosphoserine. One can recognise a DEP domain in the interval 273 to 358 (SNAGIRLFEN…SRSSFFTLSK (86 aa)). At Ser-408 the chain carries Phosphoserine. The region spanning 420-689 (KLDYVLTDPG…TQSDVYKDAS (270 aa)) is the RGS domain. Phosphoserine; by MAPK is present on Ser-539. The disordered stretch occupies residues 545–586 (FPTNLYDPSPASAESAASSISSTEADTLGEPPEVSLKPSKNL). The segment covering 551–570 (DPSPASAESAASSISSTEAD) has biased composition (low complexity). At Ser-587 the chain carries Phosphoserine.

Post-translationally, phosphorylated by FUS3 and KSS1.

Functionally, desensitization to alpha-factor pheromone. Is involved in regulating the signaling pathway for responding to mating pheromone. This chain is Protein SST2 (SST2), found in Saccharomyces cerevisiae (strain ATCC 204508 / S288c) (Baker's yeast).